The following is a 375-amino-acid chain: Delta(9) fatty acid conjugase-like enzyme (375 aa).

The next 2 helical transmembrane spans lie at 38-58 (LSLSFYYLFYDLIKVCILFYV) and 66-86 (LPYSLSCIVWPLYWFFQGAFL). Positions 94–98 (HECGH) match the Histidine box-1 motif. The Histidine box-2 signature appears at 130 to 134 (HRNHH). A run of 3 helical transmembrane segments spans residues 168 to 188 (FGLVVNMVFELTFGYPSYLIF), 219 to 239 (VFFSDVGICIVLYALYRIAIA), and 241 to 261 (GAMLVLYVYGLPWVVMSAFIF). A Histidine box-3 motif is present at residues 307-311 (HVVHH).

Belongs to the fatty acid desaturase type 1 family.

It localises to the membrane. Functionally, involved in the biosynthesis of dimorphecolic acid (9-OH-18:2(10E,12E)). Catalyzes the formation of the C-9 hydroxyl group and the (E)-delta(10) double bond from the trans-linoleic acid (16:2(9Z,12E)) produced by FAD2-1. Very limited activity with cis-linoleic acid (16:2(9Z,12Z)). The protein is Delta(9) fatty acid conjugase-like enzyme of Dimorphotheca sinuata (African daisy).